The chain runs to 280 residues: Putative pyruvate, phosphate dikinase regulatory protein (280 aa).

152-159 (GISRTSKT) provides a ligand contact to ADP.

Belongs to the pyruvate, phosphate/water dikinase regulatory protein family. PDRP subfamily.

It catalyses the reaction N(tele)-phospho-L-histidyl/L-threonyl-[pyruvate, phosphate dikinase] + ADP = N(tele)-phospho-L-histidyl/O-phospho-L-threonyl-[pyruvate, phosphate dikinase] + AMP + H(+). The enzyme catalyses N(tele)-phospho-L-histidyl/O-phospho-L-threonyl-[pyruvate, phosphate dikinase] + phosphate + H(+) = N(tele)-phospho-L-histidyl/L-threonyl-[pyruvate, phosphate dikinase] + diphosphate. Its function is as follows. Bifunctional serine/threonine kinase and phosphorylase involved in the regulation of the pyruvate, phosphate dikinase (PPDK) by catalyzing its phosphorylation/dephosphorylation. The sequence is that of Putative pyruvate, phosphate dikinase regulatory protein from Clostridioides difficile (strain 630) (Peptoclostridium difficile).